A 294-amino-acid polypeptide reads, in one-letter code: Glutamate-binding protein GluB (294 aa).

The N-terminal stretch at 1 to 26 (MSHKRMFTRLAAATSAAVLAGITLTA) is a signal peptide. The N-palmitoyl cysteine moiety is linked to residue C27. The S-diacylglycerol cysteine moiety is linked to residue C27.

The protein belongs to the bacterial solute-binding protein 3 family. As to quaternary structure, the complex is composed of two ATP-binding proteins (GluA), two transmembrane proteins (GluC and GluD) and a solute-binding protein (GluB).

It localises to the cell membrane. In terms of biological role, part of the ABC transporter complex GluABCD involved in glutamate uptake. Binds glutamate with a high affinity. The sequence is that of Glutamate-binding protein GluB from Corynebacterium efficiens (strain DSM 44549 / YS-314 / AJ 12310 / JCM 11189 / NBRC 100395).